Here is a 206-residue protein sequence, read N- to C-terminus: MSFTDDHDHAACQRPLERVRPFDAAAFERAVADMLTASGIAIDPIHTGKTAQRVRELWQKRLLDGYDTVPAEALGSGFADERRDMVVIRSLAVHGMCPHHLLPFRGVAHVAYLPGGRLHGFGRIARMVDAISHRYTYQEWITHEIARTLVEHGEARGAACLIEAEQLCLLMGENRRGDERVITQCYAGDFETDAEARNQFLRAIER.

Residues cysteine 97, histidine 100, and cysteine 168 each coordinate Zn(2+).

This sequence belongs to the GTP cyclohydrolase I family. As to quaternary structure, toroid-shaped homodecamer, composed of two pentamers of five dimers.

It carries out the reaction GTP + H2O = 7,8-dihydroneopterin 3'-triphosphate + formate + H(+). The protein operates within cofactor biosynthesis; 7,8-dihydroneopterin triphosphate biosynthesis; 7,8-dihydroneopterin triphosphate from GTP: step 1/1. The chain is GTP cyclohydrolase 1 from Chromobacterium violaceum (strain ATCC 12472 / DSM 30191 / JCM 1249 / CCUG 213 / NBRC 12614 / NCIMB 9131 / NCTC 9757 / MK).